Consider the following 247-residue polypeptide: NH(3)-dependent NAD(+) synthetase (247 aa).

29–36 (GLSGGVDS) contributes to the ATP binding site. Residue Asp-35 participates in Mg(2+) binding. Arg-112 lines the deamido-NAD(+) pocket. Thr-132 provides a ligand contact to ATP. Glu-137 is a Mg(2+) binding site. The deamido-NAD(+) site is built by Lys-145 and Asp-152. The ATP site is built by Lys-161 and Ser-183. 233 to 234 (HK) is a deamido-NAD(+) binding site.

This sequence belongs to the NAD synthetase family. As to quaternary structure, homodimer.

It carries out the reaction deamido-NAD(+) + NH4(+) + ATP = AMP + diphosphate + NAD(+) + H(+). It functions in the pathway cofactor biosynthesis; NAD(+) biosynthesis; NAD(+) from deamido-NAD(+) (ammonia route): step 1/1. Catalyzes the ATP-dependent amidation of deamido-NAD to form NAD. Uses ammonia as a nitrogen source. In Archaeoglobus fulgidus (strain ATCC 49558 / DSM 4304 / JCM 9628 / NBRC 100126 / VC-16), this protein is NH(3)-dependent NAD(+) synthetase.